The primary structure comprises 182 residues: Putative manganese efflux pump MntP (182 aa).

The next 6 membrane-spanning stretches (helical) occupy residues 6-26, 37-57, 71-91, 101-121, 131-151, and 162-182; these read LIPL…VSLG, ILYI…IGMV, HFAG…SSIL, IGIS…SVGL, VITI…GLFI, and YGEI…LFPI.

This sequence belongs to the MntP (TC 9.B.29) family.

The protein resides in the cell membrane. In terms of biological role, probably functions as a manganese efflux pump. The chain is Putative manganese efflux pump MntP from Bacillus cereus (strain Q1).